The chain runs to 273 residues: Glutamate racemase (273 aa).

Substrate contacts are provided by residues 19 to 20 and 51 to 52; these read DS and YG. C83 (proton donor/acceptor) is an active-site residue. 84–85 contacts substrate; that stretch reads NT. C198 functions as the Proton donor/acceptor in the catalytic mechanism. 199-200 contributes to the substrate binding site; the sequence is TH.

The protein belongs to the aspartate/glutamate racemases family.

The enzyme catalyses L-glutamate = D-glutamate. It functions in the pathway cell wall biogenesis; peptidoglycan biosynthesis. In terms of biological role, provides the (R)-glutamate required for cell wall biosynthesis. This chain is Glutamate racemase, found in Agrobacterium fabrum (strain C58 / ATCC 33970) (Agrobacterium tumefaciens (strain C58)).